The chain runs to 1108 residues: MSAWLLPAGGFPGAGFCIPAWQSRSSLSRVLRWPGPGLPGLLLLLLLPSPSAFSAVFKVGVLGPWACDPIFARARPDLAARLATDRLNRDLALDGGPWFEVTLLPEPCLTPGSLGAVSSALTRVSGLVGPVNPAACRPAELLAQEAGVALVPWGCPGTRAAGTTAPAVTPAADALYVLLKAFRWARVALITAPQDLWVEAGRALSTALRARGLPVALVTSMVPSDLSGAREALRRIRDGPRVRVVIMVMHSVLLGGEEQRYLLEAAEELGLTDGSLVFLPFDTLHYALSPGPEALAAFVNSSKLRRAHDAVLTLTRRCPPGGSVQDSLRRAQEHQELPLDLDLKQVSPLFGTIYDAVFLLAGGVTRARAAVGGGWVSGASVARQMREAQVFGFCGILGRTEEPSFVLLDTDAAGERLFTTHLLDPVLGSLRSAGTPVHFPRGAPAPGPDPSCWFDPDVICNGGVEPGLVFVGFLLVIVVGLTGAFLAHYLRHRLLHMQMVSGPNKIILTLEDVTFLHPQGGSSRKVAQGSRSSLATRSTSDIRSVPSQPQESTNIGLYEGDWVWLKKFPGEHHMAIRPATKMAFSKLRELRHENVALYLGLFLAGTADSPATPGEGILAVVSEHCARGSLHDLLAQRDIKLDWMFKSSLLLDLIKGMRYLHHRGVAHGRLKSRNCVVDGRFVLKVTDHGHGRLLEAQRVLPEPPSAEDQLWTAPELLRDPALERRGTLAGDVFSLGIIMQEVVCRSTPYAMLELTPEEVIQRVRSPPPLCRPLVSMDQAPMECIQLMAQCWAEHPELRPSMDLTFDLFKGINKGRKTNIIDSMLRMLEQYSSNLEDLIRERTEELEQEKQKTDRLLTQMLPPSVAEALKMGTSVEPEYFEEVTLYFSDIVGFTTISAMSEPIEVVDLLNDLYTLFDAIIGSHDVYKVETIGDAYMVASGLPQRNGQRHAAEIANMSLDILSAVGSFRMRHMPEVPVRIRIGLHSGPCVAGVVGLTMPRYCLFGDTVNTASRMESTGLPYRIHVNMSTVRILRALDQGFQMECRGRTELKGKGVEDTYWLVGRVGFNKPIPKPPDLQPGASNHGISLQEIPPERRKKLEKARPGQFTGK.

The first 54 residues, methionine 1 to serine 54, serve as a signal peptide directing secretion. Residues alanine 55–glutamate 465 lie on the Extracellular side of the membrane. Cysteine 108 and cysteine 136 are joined by a disulfide. Asparagine 300 carries an N-linked (GlcNAc...) asparagine glycan. Residues proline 466–leucine 490 traverse the membrane as a helical segment. At arginine 491–lysine 1108 the chain is on the cytoplasmic side. Positions glycine 520–serine 552 are disordered. Residues glycine 520 to isoleucine 811 form the Protein kinase domain. A compositionally biased stretch (polar residues) spans glycine 529 to serine 552. The 131-residue stretch at threonine 883–glutamate 1013 folds into the Guanylate cyclase domain. Positions isoleucine 1069–lysine 1108 are disordered.

Belongs to the adenylyl cyclase class-4/guanylyl cyclase family. In terms of assembly, homodimer; requires homodimerization for guanylyl cyclase activity. Interacts (via C-terminus) with RD3 (via C-terminus); promotes the exit of GUCY2E from the endoplasmic reticulum and its trafficking to the photoreceptor outer segments. Interaction with RD3 negatively regulates GUCY2E guanylate cyclase activity. Post-translationally, there are 9 conserved cysteine residues in sensory guanylate cyclases, 6 in the extracellular domain, which may be involved in intra- or interchain disulfide bonds. In terms of tissue distribution, expressed in retina and enriched in photoreceptor outer segments.

The protein localises to the membrane. It is found in the photoreceptor outer segment membrane. Its subcellular location is the endoplasmic reticulum membrane. It carries out the reaction GTP = 3',5'-cyclic GMP + diphosphate. Activated by GUCA1A when free calcium ions concentration is low, and inhibited by GUCA1A when free calcium ions concentration is high. Negatively regulated by RD3; inhibits the basal and GUCA1A-stimulated guanylate cyclase activity. Its function is as follows. Catalyzes the synthesis of cyclic GMP (cGMP) in rods and cones of photoreceptors. Plays an essential role in phototransduction, by mediating cGMP replenishment. May also participate in the trafficking of membrane-asociated proteins to the photoreceptor outer segment membrane. The chain is Retinal guanylyl cyclase 1 (Gucy2e) from Rattus norvegicus (Rat).